A 797-amino-acid chain; its full sequence is Probable DNA polymerase (797 aa).

Belongs to the DNA polymerase type-B family.

The protein localises to the mitochondrion. The catalysed reaction is DNA(n) + a 2'-deoxyribonucleoside 5'-triphosphate = DNA(n+1) + diphosphate. The chain is Probable DNA polymerase from Agaricus bitorquis (Pavement mushroom).